A 527-amino-acid chain; its full sequence is Glutamate--cysteine ligase (527 aa).

Belongs to the glutamate--cysteine ligase type 1 family. Type 1 subfamily.

The catalysed reaction is L-cysteine + L-glutamate + ATP = gamma-L-glutamyl-L-cysteine + ADP + phosphate + H(+). It participates in sulfur metabolism; glutathione biosynthesis; glutathione from L-cysteine and L-glutamate: step 1/2. The chain is Glutamate--cysteine ligase from Pseudomonas aeruginosa (strain ATCC 15692 / DSM 22644 / CIP 104116 / JCM 14847 / LMG 12228 / 1C / PRS 101 / PAO1).